A 257-amino-acid polypeptide reads, in one-letter code: Capsid protein (257 aa).

The Bipartite nuclear localization signal signature appears at 3–20 (KRNYDTAFSTPMSNVRRR). The Nuclear localization signal motif lies at 41–55 (KRRRWTNRPMWRKPR). Residues 69 to 86 (CEGPCKVQSFEAKHDISH) fold into a zinc finger. The short motif at 102–123 (ITHRVGKRFCVKSIWVTGKIWM) is the Nuclear export signal element. A Bipartite nuclear localization signal motif is present at residues 201 to 248 (SKFYRVNNYVVYNHQEAAKYENHTENALLLYMACTHASNPVYATLKIR).

Belongs to the geminiviridae capsid protein family. In terms of assembly, homomultimer. Binds to single-stranded and double-stranded viral DNA. Interacts (via nuclear localization signals) with host importin alpha-1a.

The protein resides in the virion. It is found in the host nucleus. In terms of biological role, encapsidates the viral DNA into characteristic twinned ('geminate') particles. Binds the genomic viral ssDNA and shuttles it into and out of the cell nucleus. The CP of bipartite geminiviruses is not required for cell-to-cell or systemic movement. The polypeptide is Capsid protein (Glycine max (Soybean)).